The following is a 279-amino-acid chain: H-2 class II histocompatibility antigen gamma chain (279 aa).

The tract at residues 1 to 23 (MDDQRDLISNHEQLPILGNRPRE) is disordered. Residues 1–29 (MDDQRDLISNHEQLPILGNRPREPERCSR) lie on the Cytoplasmic side of the membrane. Position 9 is a phosphoserine (Ser-9). The helical; Signal-anchor for type II membrane protein transmembrane segment at 30–55 (GALYTGVSVLVALLLAGQATTAYFLY) threads the bilayer. At 56-279 (QQQGRLDKLT…TRQELGQVTL (224 aa)) the chain is on the extracellular side. N-linked (GlcNAc...) asparagine glycosylation is found at Asn-113 and Asn-119. Residues 193 to 254 (LTKCQEEVSH…HTKSRGRHNC (62 aa)) enclose the Thyroglobulin type-1 domain. 3 disulfide bridges follow: Cys-196–Cys-215, Cys-226–Cys-233, and Cys-235–Cys-254. A glycan (O-linked (Xyl...) (chondroitin sulfate) serine) is linked at Ser-265.

Nonamer composed of three alpha/beta/gamma heterotrimers. Interacts with CD44; this complex is essential for the MIF-induced signaling cascade that results in B cell survival. As to quaternary structure, interacts with the mature form of CTSL; the complex survive in neutral pH environment. Expressed in thymus and lymph noodes. Expressed by antigen-presenting cells (APCs). In terms of tissue distribution, expressed in thymus and lymph noodes.

The protein resides in the late endosome. It localises to the lysosome. The protein localises to the cell membrane. Its subcellular location is the endoplasmic reticulum membrane. It is found in the golgi apparatus. The protein resides in the trans-Golgi network. It localises to the endosome. The protein localises to the secreted. Functionally, plays a critical role in MHC class II antigen processing by stabilizing peptide-free class II alpha/beta heterodimers in a complex soon after their synthesis and directing transport of the complex from the endoplasmic reticulum to compartments where peptide loading of class II takes place. Enhance also the stimulation of T-cell responses through interaction with CD44. In terms of biological role, stabilizes the conformation of mature CTSL by binding to its active site and serving as a chaperone to help maintain a pool of mature enzyme in endocytic compartments and extracellular space of antigen-presenting cells (APCs). Binds to the peptide-binding site of MHC class II alpha/beta heterodimers forming an alpha-beta-CLIP complex, thereby preventing the loading of antigenic peptides to the MHC class II complex until its release by HLA-DM in the endosome. The chain is H-2 class II histocompatibility antigen gamma chain from Mus musculus (Mouse).